We begin with the raw amino-acid sequence, 694 residues long: ATP-dependent RNA helicase DHX33 (694 aa).

One can recognise a Helicase ATP-binding domain in the interval 78 to 246; it reads LKELEANDTV…FNCKGMYLEG (169 aa). Residue 91–98 coordinates ATP; it reads SETGSGKT. A DEAH box motif is present at residues 188–191; it reads DEAH. The region spanning 270-443 is the Helicase C-terminal domain; it reads TLFHIHRTTP…SMVLQLLALD (174 aa).

The protein belongs to the DEAD box helicase family. DEAH subfamily.

Its subcellular location is the nucleus. It localises to the nucleolus. It catalyses the reaction ATP + H2O = ADP + phosphate + H(+). Part of a translational control module, also containing pths/DDX47 and ais/DDX52, which coordinates germline stem cell differentiation with ribosome biogenesis during oogenesis. This module allows for coregulation of ribosomal proteins and non1/GTPBP4, a p53 repressor, preventing p53 stabilization, cell cycle arrest and loss of stem cell differentiation. The sequence is that of ATP-dependent RNA helicase DHX33 from Drosophila melanogaster (Fruit fly).